The sequence spans 444 residues: Serine--tRNA ligase (444 aa).

249–251 (TAE) provides a ligand contact to L-serine. Residues 280-282 (RRE) and Val-296 contribute to the ATP site. Residue Glu-303 coordinates L-serine. 367–370 (EIVS) lines the ATP pocket. Position 401 (Thr-401) interacts with L-serine.

It belongs to the class-II aminoacyl-tRNA synthetase family. Type-1 seryl-tRNA synthetase subfamily. Homodimer. The tRNA molecule binds across the dimer.

It localises to the cytoplasm. The catalysed reaction is tRNA(Ser) + L-serine + ATP = L-seryl-tRNA(Ser) + AMP + diphosphate + H(+). It catalyses the reaction tRNA(Sec) + L-serine + ATP = L-seryl-tRNA(Sec) + AMP + diphosphate + H(+). The protein operates within aminoacyl-tRNA biosynthesis; selenocysteinyl-tRNA(Sec) biosynthesis; L-seryl-tRNA(Sec) from L-serine and tRNA(Sec): step 1/1. Catalyzes the attachment of serine to tRNA(Ser). Is also able to aminoacylate tRNA(Sec) with serine, to form the misacylated tRNA L-seryl-tRNA(Sec), which will be further converted into selenocysteinyl-tRNA(Sec). In Picrophilus torridus (strain ATCC 700027 / DSM 9790 / JCM 10055 / NBRC 100828 / KAW 2/3), this protein is Serine--tRNA ligase.